A 217-amino-acid chain; its full sequence is Large ribosomal subunit protein uL3 (217 aa).

This sequence belongs to the universal ribosomal protein uL3 family. In terms of assembly, part of the 50S ribosomal subunit. Forms a cluster with proteins L14 and L19.

One of the primary rRNA binding proteins, it binds directly near the 3'-end of the 23S rRNA, where it nucleates assembly of the 50S subunit. The chain is Large ribosomal subunit protein uL3 from Brachyspira hyodysenteriae (strain ATCC 49526 / WA1).